The primary structure comprises 135 residues: MAEGQEEHFSRTQRLKAAVHYVVGSLCQEVADDKEIDFSKQAIAAISEITFRQCESFAKDLEIFARHAKRTTINMDDVKLLARRSRSLYAHISKCSDEIAANSLEQKEKKKKKSVSGGNVSRNSDMDTVVPESKD.

Positions 103–135 are disordered; it reads SLEQKEKKKKKSVSGGNVSRNSDMDTVVPESKD.

Belongs to the TAF9 family. CENP-S/MHF1 subfamily. In terms of assembly, heterodimer with CENPX, sometimes called MHF; this interaction stabilizes both partners. MHF heterodimers can assemble to form tetrameric structures. MHF also coassemble with CENPT-CENPW heterodimers at centromeres to form the tetrameric CENP-T-W-S-X complex. Forms a discrete complex with FANCM and CENPX, called FANCM-MHF; this interaction, probably mediated by direct binding between CENPS and FANCM, leads to synergistic activation of double-stranded DNA binding and strongly stimulates FANCM-mediated DNA remodeling. Recruited by FANCM to the Fanconi anemia (FA) core complex, which consists of CENPS, CENPX, FANCA, FANCB, FANCC, FANCE, FANCF, FANCG, FANCL, FANCM, FAAP24 and FAAP100. The FA core complex associates with Bloom syndrome (BLM) complex, which consists of at least BLM, DNA topoisomerase 3-alpha (TOP3A), RMI1/BLAP75, RPA1/RPA70 and RPA2/RPA32. The super complex between FA and BLM is called BRAFT. Component of the CENPA-CAD complex, composed of CENPI, CENPK, CENPL, CENPO, CENPP, CENPQ, CENPR and CENPS. The CENPA-CAD complex is probably recruited on centromeres by the CENPA-NAC complex, at least composed of CENPA, CENPC, CENPH, CENPM, CENPN, CENPT and CENPU.

Its subcellular location is the nucleus. The protein resides in the chromosome. It is found in the centromere. It localises to the kinetochore. Its function is as follows. DNA-binding component of the Fanconi anemia (FA) core complex. Required for the normal activation of the FA pathway, leading to monoubiquitination of the FANCI-FANCD2 complex in response to DNA damage, cellular resistance to DNA cross-linking drugs, and prevention of chromosomal breakage. In complex with CENPX (MHF heterodimer), crucial cofactor for FANCM in both binding and ATP-dependent remodeling of DNA. Stabilizes FANCM. In complex with CENPX and FANCM (but not other FANC proteins), rapidly recruited to blocked forks and promotes gene conversion at blocked replication forks. In complex with CENPT, CENPW and CENPX (CENP-T-W-S-X heterotetramer), involved in the formation of a functional kinetochore outer plate, which is essential for kinetochore-microtubule attachment and faithful mitotic progression. As a component of MHF and CENP-T-W-S-X complexes, binds DNA and bends it to form a nucleosome-like structure. DNA-binding function is fulfilled in the presence of CENPX, with the following preference for DNA substates: Holliday junction &gt; double-stranded &gt; splay arm &gt; single-stranded. Does not bind DNA on its own. This chain is Centromere protein S (cenps), found in Xenopus laevis (African clawed frog).